A 66-amino-acid chain; its full sequence is Beta-toxin Chui2 (66 aa).

The LCN-type CS-alpha/beta domain occupies 1–66 (KEGYIVNSYT…VWPLKNKTCN (66 aa)). 4 cysteine pairs are disulfide-bonded: cysteine 12–cysteine 65, cysteine 16–cysteine 41, cysteine 25–cysteine 46, and cysteine 29–cysteine 48. Asparagine 66 carries the post-translational modification Asparagine amide.

It belongs to the long (4 C-C) scorpion toxin superfamily. Sodium channel inhibitor family. Beta subfamily. In terms of tissue distribution, expressed by the venom gland.

It is found in the secreted. Beta toxins bind voltage-independently at site-4 of sodium channels (Nav) and shift the voltage of activation toward more negative potentials thereby affecting sodium channel activation and promoting spontaneous and repetitive firing. The polypeptide is Beta-toxin Chui2 (Centruroides huichol (Scorpion)).